A 270-amino-acid polypeptide reads, in one-letter code: Release factor glutamine methyltransferase (270 aa).

S-adenosyl-L-methionine is bound by residues 113 to 117 (GTGSG), Asp136, and Asn177. 177 to 180 (NPPY) is a binding site for substrate.

The protein belongs to the protein N5-glutamine methyltransferase family. PrmC subfamily.

It catalyses the reaction L-glutaminyl-[peptide chain release factor] + S-adenosyl-L-methionine = N(5)-methyl-L-glutaminyl-[peptide chain release factor] + S-adenosyl-L-homocysteine + H(+). In terms of biological role, methylates the class 1 translation termination release factors RF1/PrfA and RF2/PrfB on the glutamine residue of the universally conserved GGQ motif. The chain is Release factor glutamine methyltransferase from Lactococcus lactis subsp. lactis (strain IL1403) (Streptococcus lactis).